A 141-amino-acid chain; its full sequence is UPF0310 protein SGO_1818 (141 aa).

Belongs to the UPF0310 family.

In Streptococcus gordonii (strain Challis / ATCC 35105 / BCRC 15272 / CH1 / DL1 / V288), this protein is UPF0310 protein SGO_1818.